The sequence spans 177 residues: MTKTTKSANTKTPDEVKTDGLKEKMVSVNRVTKVVKGGRILGFAALTVVGDGKGSVGMGKGKSREVPLAVQKAMDEARQRMVRVNLINGTLHHSVIGRHGAARVYMQPASEGTGIIAGGPMRAIFEVMGVHNILAKCLGSTNPYNIVRATLDGLSKVQTPAMIAAKRGKSIDEITGA.

The 64-residue stretch at 21-84 (LKEKMVSVNR…DEARQRMVRV (64 aa)) folds into the S5 DRBM domain.

This sequence belongs to the universal ribosomal protein uS5 family. As to quaternary structure, part of the 30S ribosomal subunit. Contacts proteins S4 and S8.

Functionally, with S4 and S12 plays an important role in translational accuracy. Its function is as follows. Located at the back of the 30S subunit body where it stabilizes the conformation of the head with respect to the body. The protein is Small ribosomal subunit protein uS5 of Nitrosomonas europaea (strain ATCC 19718 / CIP 103999 / KCTC 2705 / NBRC 14298).